The following is a 152-amino-acid chain: Interleukin-1 family member 10 (152 aa).

This sequence belongs to the IL-1 family. In terms of assembly, interacts with cargo receptor TMED10; the interaction mediates the translocation from the cytoplasm into the ERGIC (endoplasmic reticulum-Golgi intermediate compartment) and thereby secretion.

The protein localises to the cytoplasm. It localises to the endoplasmic reticulum-Golgi intermediate compartment. It is found in the secreted. In terms of biological role, cytokine with immunomodulatory activity. Alone, does not induce cytokine production, but reduces IL22 and IL17A production by T-cells in response to heat-killed Candida albicans. Reduces IL36G-induced production of IL8 by peripheral blood mononuclear cells. Increases IL6 production by dendritic cells stimulated by bacterial lipopolysaccharides (LPS). Ligand for IL-36R/IL1RL2. The polypeptide is Interleukin-1 family member 10 (Il1f10) (Mus musculus (Mouse)).